Here is a 428-residue protein sequence, read N- to C-terminus: BTB/POZ domain-containing protein KCTD16 (428 aa).

The region spanning 25–98 (EVVELNVGGQ…LRDRQVVLPD (74 aa)) is the BTB domain. Tyr112 is modified (phosphotyrosine). Phosphoserine is present on residues Ser130, Ser137, Ser143, and Ser146.

As to quaternary structure, homopentamer; forms an open pentamer. In contrast to other BTB domain-containing proteins, does not interact with CUL3. Interacts as a tetramer with GABRB1 and GABRB2.

Its subcellular location is the presynaptic cell membrane. The protein resides in the postsynaptic cell membrane. Its function is as follows. Auxiliary subunit of GABA-B receptors that determine the pharmacology and kinetics of the receptor response. Increases agonist potency and markedly alter the G-protein signaling of the receptors by accelerating onset and promoting desensitization. The chain is BTB/POZ domain-containing protein KCTD16 (KCTD16) from Homo sapiens (Human).